We begin with the raw amino-acid sequence, 371 residues long: Leu/Ile/Val-binding protein homolog 1 (371 aa).

The first 23 residues, M1–A23, serve as a signal peptide directing secretion.

Belongs to the leucine-binding protein family.

Its function is as follows. Component of an amino-acid transport system. This Brucella suis biovar 1 (strain 1330) protein is Leu/Ile/Val-binding protein homolog 1.